A 160-amino-acid chain; its full sequence is MFRGKFDTTIDAKGRTSIPAKFREILLDTFGDERFFLTKSSPVRLDGDQVCYGLVIYPYHEFLALEEKLKDGTALGLTVNQLASVRRTILVPAVECVADKLGRVLVPNDLRKTAQLEREIHFVGMQNKVDIYSQAVWARVCEQDEQNFPVDSAALAGLGL.

2 SpoVT-AbrB domains span residues 5–50 (KFDT…GDQV) and 93–136 (AVEC…SQAV).

The protein belongs to the MraZ family. Forms oligomers.

It is found in the cytoplasm. The protein localises to the nucleoid. The sequence is that of Transcriptional regulator MraZ from Geobacter sp. (strain M21).